A 255-amino-acid chain; its full sequence is Hydroxyacylglutathione hydrolase (255 aa).

Residues H56, H58, D60, H61, H114, D133, and H171 each contribute to the Zn(2+) site.

Belongs to the metallo-beta-lactamase superfamily. Glyoxalase II family. In terms of assembly, monomer. Requires Zn(2+) as cofactor.

It carries out the reaction an S-(2-hydroxyacyl)glutathione + H2O = a 2-hydroxy carboxylate + glutathione + H(+). The protein operates within secondary metabolite metabolism; methylglyoxal degradation; (R)-lactate from methylglyoxal: step 2/2. Thiolesterase that catalyzes the hydrolysis of S-D-lactoyl-glutathione to form glutathione and D-lactic acid. The chain is Hydroxyacylglutathione hydrolase from Bradyrhizobium sp. (strain BTAi1 / ATCC BAA-1182).